Here is a 458-residue protein sequence, read N- to C-terminus: Ribulose bisphosphate carboxylase (458 aa).

Asn111 provides a ligand contact to substrate. Lys166 (proton acceptor) is an active-site residue. Lys168 is a binding site for substrate. Mg(2+) is bound by residues Lys191, Asp193, and Glu194. Lys191 carries the post-translational modification N6-carboxylysine. His287 functions as the Proton acceptor in the catalytic mechanism. Residues Arg288, His321, and Ser368 each contribute to the substrate site.

Belongs to the RuBisCO large chain family. Type II subfamily. Homodimer. It depends on Mg(2+) as a cofactor.

The enzyme catalyses 2 (2R)-3-phosphoglycerate + 2 H(+) = D-ribulose 1,5-bisphosphate + CO2 + H2O. It catalyses the reaction D-ribulose 1,5-bisphosphate + O2 = 2-phosphoglycolate + (2R)-3-phosphoglycerate + 2 H(+). In terms of biological role, ruBisCO catalyzes two reactions: the carboxylation of D-ribulose 1,5-bisphosphate, the primary event in carbon dioxide fixation, as well as the oxidative fragmentation of the pentose substrate. Both reactions occur simultaneously and in competition at the same active site. The polypeptide is Ribulose bisphosphate carboxylase (cbbM) (Rhodobacter capsulatus (strain ATCC BAA-309 / NBRC 16581 / SB1003)).